The primary structure comprises 193 residues: Potassium-transporting ATPase KdpC subunit (193 aa).

Residues 7–27 traverse the membrane as a helical segment; the sequence is PLVVLFVVLNAVTGLAYPAVM.

This sequence belongs to the KdpC family. The system is composed of three essential subunits: KdpA, KdpB and KdpC.

It localises to the cell inner membrane. Its function is as follows. Part of the high-affinity ATP-driven potassium transport (or Kdp) system, which catalyzes the hydrolysis of ATP coupled with the electrogenic transport of potassium into the cytoplasm. This subunit acts as a catalytic chaperone that increases the ATP-binding affinity of the ATP-hydrolyzing subunit KdpB by the formation of a transient KdpB/KdpC/ATP ternary complex. This is Potassium-transporting ATPase KdpC subunit from Burkholderia cenocepacia (strain HI2424).